We begin with the raw amino-acid sequence, 509 residues long: FAD-linked oxidoreductase dpmaF (509 aa).

The N-terminal stretch at 1-21 (MTRLSLQLIAGLAGQAWLVNS) is a signal peptide. Positions 59–231 (LQYEPIAVAV…AEYGFETFPA (173 aa)) constitute an FAD-binding PCMH-type domain. N-linked (GlcNAc...) asparagine glycans are attached at residues Asn-125, Asn-193, and Asn-281.

Belongs to the oxygen-dependent FAD-linked oxidoreductase family. The cofactor is FAD.

It functions in the pathway secondary metabolite biosynthesis; terpenoid biosynthesis. FAD-linked oxidoreductase; part of the gene cluster that mediates the biosynthesis of the diterpenoid pyrones subglutinols A and B. The first step of the pathway is the synthesis of the alpha-pyrone moiety by the polyketide synthase dpmaA via condensation of one acetyl-CoA starter unit with 3 malonyl-CoA units and 2 methylations. The alpha-pyrone is then combined with geranylgeranyl pyrophosphate (GGPP) formed by the GGPP synthase dpmaD through the action of the prenyltransferase dpmaC to yield a linear alpha-pyrone diterpenoid. Subsequent steps in the diterpenoid pyrone biosynthetic pathway involve the decalin core formation, which is initiated by the epoxidation of the C10-C11 olefin by the FAD-dependent oxidoreductase dpmaE, and is followed by a cyclization cascade catalyzed by the terpene cyclase dpmaB. The dehydrogenase dpmaF is then involved in tetrahydrofuran (THF) ring formation at the C5 unit to complete the formation of subglutinols A and B. This Metarhizium anisopliae (Entomophthora anisopliae) protein is FAD-linked oxidoreductase dpmaF.